The primary structure comprises 404 residues: Probable tRNA sulfurtransferase (404 aa).

Residues 60–165 (RSVIEALKPV…DEAAYLSHED (106 aa)) enclose the THUMP domain. ATP-binding positions include 183–184 (ML), 208–209 (HF), arginine 265, glycine 287, and glutamine 296.

This sequence belongs to the ThiI family.

Its subcellular location is the cytoplasm. It catalyses the reaction [ThiI sulfur-carrier protein]-S-sulfanyl-L-cysteine + a uridine in tRNA + 2 reduced [2Fe-2S]-[ferredoxin] + ATP + H(+) = [ThiI sulfur-carrier protein]-L-cysteine + a 4-thiouridine in tRNA + 2 oxidized [2Fe-2S]-[ferredoxin] + AMP + diphosphate. The enzyme catalyses [ThiS sulfur-carrier protein]-C-terminal Gly-Gly-AMP + S-sulfanyl-L-cysteinyl-[cysteine desulfurase] + AH2 = [ThiS sulfur-carrier protein]-C-terminal-Gly-aminoethanethioate + L-cysteinyl-[cysteine desulfurase] + A + AMP + 2 H(+). It functions in the pathway cofactor biosynthesis; thiamine diphosphate biosynthesis. Its function is as follows. Catalyzes the ATP-dependent transfer of a sulfur to tRNA to produce 4-thiouridine in position 8 of tRNAs, which functions as a near-UV photosensor. Also catalyzes the transfer of sulfur to the sulfur carrier protein ThiS, forming ThiS-thiocarboxylate. This is a step in the synthesis of thiazole, in the thiamine biosynthesis pathway. The sulfur is donated as persulfide by IscS. The sequence is that of Probable tRNA sulfurtransferase from Streptococcus equi subsp. zooepidemicus (strain H70).